The sequence spans 2183 residues: Coagulation factor V (2183 aa).

Residues 1-19 (MLLVCPCFFLLVVLGTRWA) form the signal peptide. 4 Plastocyanin-like domains span residues 30-192 (QLRQ…LLIC), 202-328 (TQKM…IKNC), 347-524 (KRWE…LLIC), and 534-682 (VQRV…DVKC). 2 consecutive F5/8 type A domains span residues 30 to 328 (QLRQ…IKNC) and 347 to 682 (KRWE…DVKC). The Ca(2+) site is built by aspartate 138 and aspartate 139. Residues asparagine 176, asparagine 238, and asparagine 381 are each glycosylated (N-linked (GlcNAc...) asparagine). Threonine 638 carries the phosphothreonine modification. The segment at 691-1533 (SYEIYEPPAP…PDTIAAWYLR (843 aa)) is b. A sulfotyrosine mark is found at tyrosine 692 and tyrosine 725. The propeptide at 737 to 1533 (SFKNSSLNPE…PDTIAAWYLR (797 aa)) is activation peptide (connecting region). Residue asparagine 841 is glycosylated (N-linked (GlcNAc...) asparagine). Disordered stretches follow at residues 884–904 (PAGKTGRHSNPKNSYSGMKSE), 947–1045 (DVDK…FPDR), and 1059–1144 (ETAL…YDLS). Residues 892 to 908 (SNPKNSYSGMKSEEDIP) form a 1 X 17 AA tandem repeats region. The 1-1 repeat unit spans residues 892 to 911 (SNPKNSYSGMKSEEDIPSEL). At serine 903 the chain carries Phosphoserine. The segment covering 951 to 975 (LTNSPQNQNITVPRGESTSHTNTTR) has biased composition (polar residues). Asparagine 959 and asparagine 972 each carry an N-linked (GlcNAc...) asparagine glycan. A compositionally biased stretch (basic residues) spans 1010–1021 (RTRKKKKNKKLA). Composition is skewed to polar residues over residues 1059-1099 (ETAL…SLDL) and 1120-1134 (THSTTDPSYRSSPPE). A run of 32 repeats spans residues 1175-1183 (IPSSDLSLF), 1184-1192 (TISPELDQT), 1193-1201 (IIYPDLDQL), 1202-1210 (LLSPEDNQK), 1211-1219 (TSSPDLGQV), 1220-1228 (PLSPDDNQK), 1229-1237 (TSSPDLGQV), 1238-1246 (SLSPDDNQK), 1247-1255 (TSSPDLGQV), 1256-1264 (PLSLDDNQK), 1265-1273 (TTSPDLGQV), 1274-1282 (PLSPDDNQM), 1283-1291 (ITSPDLGQV), 1292-1299 (PLSSDNQK), 1300-1308 (TSSPDLGQV), 1309-1316 (PLFPEDNQ), 1317-1325 (NYFLDLSQV), 1326-1334 (PLSSDQNQE), 1335-1341 (TSSTDLL), 1342-1350 (TLSPDFGQT), 1351-1359 (VLSPDLDQL), 1360-1368 (PLPSDNSQV), 1369-1377 (TVSPDLSLL), 1378-1386 (TLSPDFNEI), 1387-1395 (ILAPDLGQV), 1396-1404 (TLSPDLIQT), 1405-1413 (NPALNHGHK), 1414-1422 (ASSADPDQA), 1423-1431 (SYPPDSGQA), 1432-1440 (SSLPELNRT), 1441-1449 (LPHPDLTHI), and 1452-1461 (PSPSPTLNNT). The 32 X 9 AA approximate tandem repeats of [TNP]-L-S-P-D-L-S-Q-T stretch occupies residues 1175 to 1461 (IPSSDLSLFT…PSPSPTLNNT (287 aa)). The interval 1204 to 1312 (SPEDNQKTSS…PDLGQVPLFP (109 aa)) is disordered. Over residues 1228 to 1251 (KTSSPDLGQVSLSPDDNQKTSSPD) the composition is skewed to polar residues. Positions 1292–1304 (PLSSDNQKTSSPD) are enriched in polar residues. Residues 1403-1462 (QTNPALNHGHKASSADPDQASYPPDSGQASSLPELNRTLPHPDLTHIPPPSPSPTLNNTS) form a disordered region. The N-linked (GlcNAc...) asparagine glycan is linked to asparagine 1438. Plastocyanin-like domains lie at 1538-1711 (HKKF…LLIC) and 1721-1866 (NLPM…DKEC). Residues 1538-1866 (HKKFYYIAAE…TPFLIIDKEC (329 aa)) form the F5/8 type A 3 domain. Residues histidine 1802 and histidine 1804 each contribute to the Cu cation site. N-linked (GlcNAc...) asparagine glycosylation occurs at asparagine 1811. F5/8 type C domains are found at residues 1866–2020 (CKMP…LQGC) and 2025–2180 (CSTP…LFGC). Cystine bridges form between cysteine 1866–cysteine 2020 and cysteine 2025–cysteine 2180.

It belongs to the multicopper oxidase family. Factor Va, the activated form of factor V, is composed of a heavy chain and a light chain, non-covalently bound. The interaction between the two chains is calcium-dependent. Forms heterodimer with SERPINA5. In terms of processing, thrombin activates factor V proteolytically to the active cofactor, factor Va (formation of a heavy chain at the N-terminus and a light chain at the C-terminus). Post-translationally, sulfation is required for efficient thrombin cleavage and activation and for full procoagulant activity. Activated protein C inactivates factor V and factor Va by proteolytic degradation.

It localises to the secreted. Its activity is regulated as follows. Inhibited by SERPINA5. Functionally, central regulator of hemostasis. It serves as a critical cofactor for the prothrombinase activity of factor Xa that results in the activation of prothrombin to thrombin. In Mus musculus (Mouse), this protein is Coagulation factor V (F5).